The chain runs to 419 residues: DNA-directed RNA polymerase I subunit RPA49 (419 aa).

Residues serine 35 and serine 163 each carry the phosphoserine modification. Residue lysine 373 is modified to N6-acetyllysine. Residues 397–419 (GTLSLPLPPAQTSDRLAKRRKIT) are disordered.

Belongs to the eukaryotic RPA49/POLR1E RNA polymerase subunit family. In terms of assembly, component of the RNA polymerase I (Pol I) complex consisting of 13 subunits: a ten-subunit catalytic core composed of POLR1A/RPA1, POLR1B/RPA2, POLR1C/RPAC1, POLR1D/RPAC2, POLR1H/RPA12, POLR2E/RPABC1, POLR2F/RPABC2, POLR2H/RPABC3, POLR2K/RPABC4 and POLR2L/RPABC5; a mobile stalk subunit POLR1F/RPA43 protruding from the core and additional subunits homologous to general transcription factors POLR1E/RPA49 and POLR1G/RPA34. Forms a heterodimer with POLR1G/RPA34. Interacts with POLR1G. Also binds UBTF/UBF. Interacts with PWP1. Post-translationally, acetylated at Lys-373 by CREBBP/CBP, leading to decreased RNA polymerase I transcription. In normal conditions, deacetylated by SIRT7, promoting the association of RNA polymerase I with the rDNA promoter region and coding region. In response to stress, SIRT7 is released from nucleoli leading to hyperacetylation of POLR1E/PAF53 and decreased association of RNA polymerase I with the rDNA promoter region.

The protein localises to the nucleus. The protein resides in the nucleolus. Its function is as follows. Component of RNA polymerase I (Pol I), a DNA-dependent RNA polymerase which synthesizes ribosomal RNA precursors using the four ribonucleoside triphosphates as substrates. Appears to be involved in the formation of the initiation complex at the promoter by mediating the interaction between Pol I and UBTF/UBF. The protein is DNA-directed RNA polymerase I subunit RPA49 (POLR1E) of Homo sapiens (Human).